The following is an 89-amino-acid chain: MSRKCPLTGKRPRRGYSYTLRGIAKKKKGIGLKVTGKTKRRFFPNMLTKRLWSTEENRFLKLKISASALRHIDKLGLEKVLERAKSKNF.

The protein belongs to the bacterial ribosomal protein bL28 family.

The sequence is that of Large ribosomal subunit protein bL28 from Chlamydia pneumoniae (Chlamydophila pneumoniae).